We begin with the raw amino-acid sequence, 273 residues long: NADPH-dependent 7-cyano-7-deazaguanine reductase (273 aa).

V80–S82 serves as a coordination point for substrate. S82 to K83 is an NADPH binding site. The Thioimide intermediate role is filled by C180. D187 serves as the catalytic Proton donor. H219 to E220 lines the substrate pocket. R248 to G249 contributes to the NADPH binding site.

This sequence belongs to the GTP cyclohydrolase I family. QueF type 2 subfamily. Homodimer.

It is found in the cytoplasm. It carries out the reaction 7-aminomethyl-7-carbaguanine + 2 NADP(+) = 7-cyano-7-deazaguanine + 2 NADPH + 3 H(+). It functions in the pathway tRNA modification; tRNA-queuosine biosynthesis. In terms of biological role, catalyzes the NADPH-dependent reduction of 7-cyano-7-deazaguanine (preQ0) to 7-aminomethyl-7-deazaguanine (preQ1). This is NADPH-dependent 7-cyano-7-deazaguanine reductase from Bordetella pertussis (strain Tohama I / ATCC BAA-589 / NCTC 13251).